The primary structure comprises 473 residues: Photosystem II CP43 reaction center protein (473 aa).

The propeptide occupies methionine 1 to glutamate 14. At threonine 15 the chain carries N-acetylthreonine. Threonine 15 is subject to Phosphothreonine. 5 consecutive transmembrane segments (helical) span residues leucine 69 to alanine 93, leucine 134 to asparagine 155, lysine 178 to threonine 200, lysine 255 to serine 275, and tryptophan 291 to alanine 312. Position 367 (glutamate 367) interacts with [CaMn4O5] cluster. The chain crosses the membrane as a helical span at residues arginine 447–proline 471.

The protein belongs to the PsbB/PsbC family. PsbC subfamily. PSII is composed of 1 copy each of membrane proteins PsbA, PsbB, PsbC, PsbD, PsbE, PsbF, PsbH, PsbI, PsbJ, PsbK, PsbL, PsbM, PsbT, PsbX, PsbY, PsbZ, Psb30/Ycf12, at least 3 peripheral proteins of the oxygen-evolving complex and a large number of cofactors. It forms dimeric complexes. Binds multiple chlorophylls and provides some of the ligands for the Ca-4Mn-5O cluster of the oxygen-evolving complex. It may also provide a ligand for a Cl- that is required for oxygen evolution. PSII binds additional chlorophylls, carotenoids and specific lipids. is required as a cofactor.

It localises to the plastid. The protein localises to the chloroplast thylakoid membrane. In terms of biological role, one of the components of the core complex of photosystem II (PSII). It binds chlorophyll and helps catalyze the primary light-induced photochemical processes of PSII. PSII is a light-driven water:plastoquinone oxidoreductase, using light energy to abstract electrons from H(2)O, generating O(2) and a proton gradient subsequently used for ATP formation. In Cucumis sativus (Cucumber), this protein is Photosystem II CP43 reaction center protein.